Reading from the N-terminus, the 240-residue chain is Ubiquinone biosynthesis O-methyltransferase (240 aa).

Residues R44, G64, D85, and M129 each contribute to the S-adenosyl-L-methionine site.

It belongs to the methyltransferase superfamily. UbiG/COQ3 family.

The catalysed reaction is a 3-demethylubiquinol + S-adenosyl-L-methionine = a ubiquinol + S-adenosyl-L-homocysteine + H(+). The enzyme catalyses a 3-(all-trans-polyprenyl)benzene-1,2-diol + S-adenosyl-L-methionine = a 2-methoxy-6-(all-trans-polyprenyl)phenol + S-adenosyl-L-homocysteine + H(+). It participates in cofactor biosynthesis; ubiquinone biosynthesis. In terms of biological role, O-methyltransferase that catalyzes the 2 O-methylation steps in the ubiquinone biosynthetic pathway. The chain is Ubiquinone biosynthesis O-methyltransferase from Escherichia fergusonii (strain ATCC 35469 / DSM 13698 / CCUG 18766 / IAM 14443 / JCM 21226 / LMG 7866 / NBRC 102419 / NCTC 12128 / CDC 0568-73).